The primary structure comprises 357 residues: DNA replication and repair protein RecF (357 aa).

Residue 30–37 (GANGSGKT) participates in ATP binding.

It belongs to the RecF family.

It localises to the cytoplasm. In terms of biological role, the RecF protein is involved in DNA metabolism; it is required for DNA replication and normal SOS inducibility. RecF binds preferentially to single-stranded, linear DNA. It also seems to bind ATP. In Salmonella arizonae (strain ATCC BAA-731 / CDC346-86 / RSK2980), this protein is DNA replication and repair protein RecF.